The sequence spans 558 residues: Protein SET DOMAIN GROUP 41 (558 aa).

One can recognise an SET domain in the interval 115-249 (PSISVAIHHA…SGEEITVSYI (135 aa)).

Belongs to the class V-like SAM-binding methyltransferase superfamily.

The polypeptide is Protein SET DOMAIN GROUP 41 (SDG41) (Arabidopsis thaliana (Mouse-ear cress)).